The primary structure comprises 528 residues: ATP synthase subunit alpha 1 (528 aa).

Residue 169–176 coordinates ATP; the sequence is GDRQTGKT.

The protein belongs to the ATPase alpha/beta chains family. In terms of assembly, F-type ATPases have 2 components, CF(1) - the catalytic core - and CF(0) - the membrane proton channel. CF(1) has five subunits: alpha(3), beta(3), gamma(1), delta(1), epsilon(1). CF(0) has three main subunits: a(1), b(2) and c(9-12). The alpha and beta chains form an alternating ring which encloses part of the gamma chain. CF(1) is attached to CF(0) by a central stalk formed by the gamma and epsilon chains, while a peripheral stalk is formed by the delta and b chains.

It localises to the cell membrane. The enzyme catalyses ATP + H2O + 4 H(+)(in) = ADP + phosphate + 5 H(+)(out). Functionally, produces ATP from ADP in the presence of a proton gradient across the membrane. The alpha chain is a regulatory subunit. In Mycoplasmopsis pulmonis (strain UAB CTIP) (Mycoplasma pulmonis), this protein is ATP synthase subunit alpha 1.